The chain runs to 203 residues: A-type ATP synthase subunit E (203 aa).

The protein belongs to the V-ATPase E subunit family. Has multiple subunits with at least A(3), B(3), C, D, E, F, H, I and proteolipid K(x).

The protein localises to the cell membrane. Component of the A-type ATP synthase that produces ATP from ADP in the presence of a proton gradient across the membrane. In Desulfurococcus sp. (strain SY), this protein is A-type ATP synthase subunit E.